We begin with the raw amino-acid sequence, 356 residues long: Protein pelota homolog (356 aa).

This sequence belongs to the eukaryotic release factor 1 family. Pelota subfamily. In terms of assembly, monomer. A divalent metal cation is required as a cofactor.

Its subcellular location is the cytoplasm. May function in recognizing stalled ribosomes, interact with stem-loop structures in stalled mRNA molecules, and effect endonucleolytic cleavage of the mRNA. May play a role in the release non-functional ribosomes and degradation of damaged mRNAs. Has endoribonuclease activity. In Pyrococcus furiosus (strain ATCC 43587 / DSM 3638 / JCM 8422 / Vc1), this protein is Protein pelota homolog.